Here is a 402-residue protein sequence, read N- to C-terminus: Imidazolonepropionase (402 aa).

Positions 69 and 71 each coordinate Fe(3+). Residues histidine 69 and histidine 71 each coordinate Zn(2+). Arginine 78, tyrosine 141, and histidine 174 together coordinate 4-imidazolone-5-propanoate. Tyrosine 141 contributes to the N-formimidoyl-L-glutamate binding site. Fe(3+) is bound at residue histidine 239. Histidine 239 contacts Zn(2+). Position 242 (glutamine 242) interacts with 4-imidazolone-5-propanoate. Aspartate 314 contacts Fe(3+). Aspartate 314 provides a ligand contact to Zn(2+). Residues asparagine 316 and glycine 318 each contribute to the N-formimidoyl-L-glutamate site. Threonine 319 is a 4-imidazolone-5-propanoate binding site.

This sequence belongs to the metallo-dependent hydrolases superfamily. HutI family. Zn(2+) serves as cofactor. Fe(3+) is required as a cofactor.

Its subcellular location is the cytoplasm. It catalyses the reaction 4-imidazolone-5-propanoate + H2O = N-formimidoyl-L-glutamate. Its pathway is amino-acid degradation; L-histidine degradation into L-glutamate; N-formimidoyl-L-glutamate from L-histidine: step 3/3. Catalyzes the hydrolytic cleavage of the carbon-nitrogen bond in imidazolone-5-propanoate to yield N-formimidoyl-L-glutamate. It is the third step in the universal histidine degradation pathway. The chain is Imidazolonepropionase from Maricaulis maris (strain MCS10) (Caulobacter maris).